Here is a 247-residue protein sequence, read N- to C-terminus: MKILFDVGNTHTTVALTENGKFFKIKRISTYSIQTEDELYAYLKVFFGETYDEVIVSSVVPNINHVFEFFSKKYAGKSAIFLNAQSYKGITWNVKIPSEIGADRVANIIAAERDYGKDAIVVDFGTAITIDILKEKSYEGGIIIPGFSMMINALFKGTAKLPKVELKPFNGFIGKDTESNIRIGIINTVVEGIGSVINKIKNENFRDVPVIFTGGQSKIIMDYKRDVIYDLELGLRGIYYFYESVVS.

6–13 is a binding site for ATP; that stretch reads DVGNTHTT. 101-104 lines the substrate pocket; that stretch reads GADR. The active-site Proton acceptor is the aspartate 103. Aspartate 123 contacts K(+). Threonine 126 contacts ATP. Residue threonine 177 participates in substrate binding.

The protein belongs to the type III pantothenate kinase family. Homodimer. NH4(+) is required as a cofactor. K(+) serves as cofactor.

The protein localises to the cytoplasm. It catalyses the reaction (R)-pantothenate + ATP = (R)-4'-phosphopantothenate + ADP + H(+). It functions in the pathway cofactor biosynthesis; coenzyme A biosynthesis; CoA from (R)-pantothenate: step 1/5. Catalyzes the phosphorylation of pantothenate (Pan), the first step in CoA biosynthesis. The chain is Type III pantothenate kinase from Thermosipho melanesiensis (strain DSM 12029 / CIP 104789 / BI429).